A 260-amino-acid chain; its full sequence is DNA repair protein RecO (260 aa).

The disordered stretch occupies residues 239-260 (SAGVAAARKAGGDGSDGDEGEQ).

Belongs to the RecO family.

Functionally, involved in DNA repair and RecF pathway recombination. In Sodalis glossinidius (strain morsitans), this protein is DNA repair protein RecO.